Reading from the N-terminus, the 307-residue chain is Ribonuclease Z (307 aa).

Zn(2+) is bound by residues His-63, His-65, Asp-67, His-68, His-141, Asp-208, and His-266. Asp-67 acts as the Proton acceptor in catalysis.

It belongs to the RNase Z family. In terms of assembly, homodimer. Zn(2+) is required as a cofactor.

It carries out the reaction Endonucleolytic cleavage of RNA, removing extra 3' nucleotides from tRNA precursor, generating 3' termini of tRNAs. A 3'-hydroxy group is left at the tRNA terminus and a 5'-phosphoryl group is left at the trailer molecule.. In terms of biological role, zinc phosphodiesterase, which displays some tRNA 3'-processing endonuclease activity. Probably involved in tRNA maturation, by removing a 3'-trailer from precursor tRNA. This chain is Ribonuclease Z, found in Chlamydia pneumoniae (Chlamydophila pneumoniae).